Reading from the N-terminus, the 189-residue chain is MyoD family inhibitor domain-containing protein 2 (189 aa).

The MDFI domain maps to 28 to 188; the sequence is KEDTQLTNAK…LAMEISEICY (161 aa).

The protein belongs to the MDFI family.

The chain is MyoD family inhibitor domain-containing protein 2 from Homo sapiens (Human).